The chain runs to 355 residues: Peptide chain release factor 1 (355 aa).

At Q232 the chain carries N5-methylglutamine.

This sequence belongs to the prokaryotic/mitochondrial release factor family. In terms of processing, methylated by PrmC. Methylation increases the termination efficiency of RF1.

It is found in the cytoplasm. In terms of biological role, peptide chain release factor 1 directs the termination of translation in response to the peptide chain termination codons UAG and UAA. This is Peptide chain release factor 1 from Kineococcus radiotolerans (strain ATCC BAA-149 / DSM 14245 / SRS30216).